The chain runs to 86 residues: MANIKSQKKRILTNEKARLRNNAVKSELKTAIRAVNTAVESTDKDAAAAALVAASRKLDKAVSKGVLHKNNAANRKSAISKKVNAL.

The protein belongs to the bacterial ribosomal protein bS20 family.

Its function is as follows. Binds directly to 16S ribosomal RNA. This is Small ribosomal subunit protein bS20 from Arthrobacter sp. (strain FB24).